A 515-amino-acid chain; its full sequence is mRNA export factor ICP27 homolog (515 aa).

The Zn(2+) site is built by Cys230, His335, Cys337, and Cys342. Residues 230–342 (CVFNDNGHGD…SNHKCDDVSC (113 aa)) form a CHC2-type zinc finger. Residues 398-408 (YSTNHDLPQTS) are compositionally biased toward polar residues. The disordered stretch occupies residues 398-422 (YSTNHDLPQTSHRSHKNHGTPKVKS). The span at 409 to 422 (HRSHKNHGTPKVKS) shows a compositional bias: basic residues.

It belongs to the HHV-1 ICP27 protein family.

The protein resides in the virion tegument. It is found in the virion. It localises to the host nucleus. The protein localises to the host cytoplasm. Immediate early (EI) protein that plays many roles during productive infection including regulation of viral gene expression and nuclear export of intronless viral RNAs. The protein is mRNA export factor ICP27 homolog of Human herpesvirus 6A (strain Uganda-1102) (HHV-6 variant A).